Reading from the N-terminus, the 633-residue chain is Polypeptide N-acetylgalactosaminyltransferase 3 (633 aa).

Topologically, residues 1 to 19 are cytoplasmic; that stretch reads MAHLKRLVKLHIKRHYHRK. Residues 20–37 traverse the membrane as a helical; Signal-anchor for type II membrane protein segment; sequence FWKLGAVIFFFLVVLILM. Over 38–633 the chain is Lumenal; it reads QREVSVQYSK…LQKWIFSQND (596 aa). Positions 112–145 are disordered; the sequence is DRPPQDSNAPGASGKPFKITHLSPEEQKEKERGE. A compositionally biased stretch (basic and acidic residues) spans 134–145; the sequence is SPEEQKEKERGE. The segment at 184–293 is catalytic subdomain A; sequence LPTTSVIIVF…YGWLEPLLAR (110 aa). The Mn(2+) site is built by D277 and H279. N-linked (GlcNAc...) asparagine glycosylation occurs at N297. A catalytic subdomain B region spans residues 356 to 418; the sequence is PIKTPTFAGG…PCSVVGHVFR (63 aa). H415 is a binding site for Mn(2+). N484 carries N-linked (GlcNAc...) asparagine glycosylation. The Ricin B-type lectin domain occupies 504 to 630; it reads VISGYIKSVG…TDLLQKWIFS (127 aa). A disulfide bridge connects residues C517 and C535. UDP-N-acetyl-alpha-D-galactosamine-binding residues include D519, E522, H536, and N541. 2 cysteine pairs are disulfide-bonded: C561–C574 and C605–C618.

Belongs to the glycosyltransferase 2 family. GalNAc-T subfamily. Mn(2+) serves as cofactor. Highly expressed in the reproductive tract, principally in the testis and uterus, and to a lesser degree in the cervix with only trace levels in the ovary. Also expressed at high level in sublingual gland, stomach and colon, with more moderate amounts present in the submandibular and parotid gland as well as the kidney.

It is found in the golgi apparatus. Its subcellular location is the golgi stack membrane. It catalyses the reaction L-seryl-[protein] + UDP-N-acetyl-alpha-D-galactosamine = a 3-O-[N-acetyl-alpha-D-galactosaminyl]-L-seryl-[protein] + UDP + H(+). The catalysed reaction is L-threonyl-[protein] + UDP-N-acetyl-alpha-D-galactosamine = a 3-O-[N-acetyl-alpha-D-galactosaminyl]-L-threonyl-[protein] + UDP + H(+). It participates in protein modification; protein glycosylation. Its function is as follows. Catalyzes the initial reaction in O-linked oligosaccharide biosynthesis, the transfer of an N-acetyl-D-galactosamine residue to a serine or threonine residue on the protein receptor. Has activity toward HIV envelope glycoprotein gp120. Has activity towards EA2, MUC2 and MUC5. Probably glycosylates fibronectin in vivo. Glycosylates FGF23. In Mus musculus (Mouse), this protein is Polypeptide N-acetylgalactosaminyltransferase 3 (Galnt3).